A 195-amino-acid chain; its full sequence is UPF0215 protein TGAM_0348 (195 aa).

This sequence belongs to the UPF0215 family.

The protein is UPF0215 protein TGAM_0348 of Thermococcus gammatolerans (strain DSM 15229 / JCM 11827 / EJ3).